Reading from the N-terminus, the 149-residue chain is Flagellar assembly factor FliW (149 aa).

This sequence belongs to the FliW family. In terms of assembly, interacts with translational regulator CsrA and flagellin(s).

It is found in the cytoplasm. Functionally, acts as an anti-CsrA protein, binds CsrA and prevents it from repressing translation of its target genes, one of which is flagellin. Binds to flagellin and participates in the assembly of the flagellum. In Thermotoga sp. (strain RQ2), this protein is Flagellar assembly factor FliW.